Reading from the N-terminus, the 260-residue chain is O-antigen export system permease protein RfbA (260 aa).

A run of 7 helical transmembrane segments spans residues 31–51 (FLGF…YVLL), 63–83 (FPFF…SVGG), 109–129 (VVVT…VLGM), 139–159 (VVLF…LTYI), 173–193 (IVSN…PLST), 201–221 (SLML…AIFY), and 229–249 (EPLM…SSIF). One can recognise an ABC transmembrane type-2 domain in the interval 32 to 252 (LGFLWTFLNP…WAASSIFESR (221 aa)).

This sequence belongs to the ABC-2 integral membrane protein family.

It is found in the cell inner membrane. May form an ATP-driven O-antigen export apparatus, in association with RfbB. The polypeptide is O-antigen export system permease protein RfbA (rfbA) (Myxococcus xanthus).